The following is a 363-amino-acid chain: Lipoyl synthase (363 aa).

Residues Cys-55, Cys-60, Cys-66, Cys-81, Cys-85, Cys-88, and Ser-292 each coordinate [4Fe-4S] cluster. One can recognise a Radical SAM core domain in the interval 67-281 (WESREATFLI…SKLAKELGFG (215 aa)). Residues 338–363 (PSEETPVTTRMAKTPAQSNSVAATIR) are disordered. The span at 352–363 (PAQSNSVAATIR) shows a compositional bias: polar residues.

This sequence belongs to the radical SAM superfamily. Lipoyl synthase family. [4Fe-4S] cluster is required as a cofactor.

It is found in the cytoplasm. It catalyses the reaction [[Fe-S] cluster scaffold protein carrying a second [4Fe-4S](2+) cluster] + N(6)-octanoyl-L-lysyl-[protein] + 2 oxidized [2Fe-2S]-[ferredoxin] + 2 S-adenosyl-L-methionine + 4 H(+) = [[Fe-S] cluster scaffold protein] + N(6)-[(R)-dihydrolipoyl]-L-lysyl-[protein] + 4 Fe(3+) + 2 hydrogen sulfide + 2 5'-deoxyadenosine + 2 L-methionine + 2 reduced [2Fe-2S]-[ferredoxin]. It functions in the pathway protein modification; protein lipoylation via endogenous pathway; protein N(6)-(lipoyl)lysine from octanoyl-[acyl-carrier-protein]: step 2/2. Its function is as follows. Catalyzes the radical-mediated insertion of two sulfur atoms into the C-6 and C-8 positions of the octanoyl moiety bound to the lipoyl domains of lipoate-dependent enzymes, thereby converting the octanoylated domains into lipoylated derivatives. The polypeptide is Lipoyl synthase (Corynebacterium aurimucosum (strain ATCC 700975 / DSM 44827 / CIP 107346 / CN-1) (Corynebacterium nigricans)).